The following is a 208-amino-acid chain: Holliday junction resolvase RecU (208 aa).

4 residues coordinate Mg(2+): T87, D89, E102, and Q121.

It belongs to the RecU family. Mg(2+) serves as cofactor.

It localises to the cytoplasm. The enzyme catalyses Endonucleolytic cleavage at a junction such as a reciprocal single-stranded crossover between two homologous DNA duplexes (Holliday junction).. Functionally, endonuclease that resolves Holliday junction intermediates in genetic recombination. Cleaves mobile four-strand junctions by introducing symmetrical nicks in paired strands. Promotes annealing of linear ssDNA with homologous dsDNA. Required for DNA repair, homologous recombination and chromosome segregation. The protein is Holliday junction resolvase RecU of Staphylococcus aureus (strain Mu3 / ATCC 700698).